The chain runs to 75 residues: Sec-independent protein translocase protein TatA (75 aa).

The chain crosses the membrane as a helical span at residues M1–G21. Residues K41–R75 form a disordered region.

Belongs to the TatA/E family. In terms of assembly, the Tat system comprises two distinct complexes: a TatABC complex, containing multiple copies of TatA, TatB and TatC subunits, and a separate TatA complex, containing only TatA subunits. Substrates initially bind to the TatABC complex, which probably triggers association of the separate TatA complex to form the active translocon.

The protein resides in the cell inner membrane. Its function is as follows. Part of the twin-arginine translocation (Tat) system that transports large folded proteins containing a characteristic twin-arginine motif in their signal peptide across membranes. TatA could form the protein-conducting channel of the Tat system. The chain is Sec-independent protein translocase protein TatA from Xanthomonas campestris pv. campestris (strain 8004).